The sequence spans 225 residues: Lipoprotein CseA (225 aa).

The first 36 residues, 1 to 36 (MRGLTDGRTPRGTRRTTQAASTAVAVFVALGVSLAG), serve as a signal peptide directing secretion. C37 carries the N-palmitoyl cysteine lipid modification. C37 carries the S-diacylglycerol cysteine lipid modification. 2 disordered regions span residues 40–77 (GGTG…APDR) and 205–225 (THND…EPDS). Over residues 60–73 (SASPAPAAKASPSK) the composition is skewed to low complexity.

The protein localises to the cell membrane. Functionally, may be involved in the stabilization of the cell envelope or may interact with the sensor protein CseC to modulate its activity, in response to cell envelope stress. The polypeptide is Lipoprotein CseA (cseA) (Streptomyces coelicolor (strain ATCC BAA-471 / A3(2) / M145)).